We begin with the raw amino-acid sequence, 358 residues long: Peptide chain release factor 1 (358 aa).

Position 233 is an N5-methylglutamine (Gln-233).

It belongs to the prokaryotic/mitochondrial release factor family. Post-translationally, methylated by PrmC. Methylation increases the termination efficiency of RF1.

The protein localises to the cytoplasm. In terms of biological role, peptide chain release factor 1 directs the termination of translation in response to the peptide chain termination codons UAG and UAA. The sequence is that of Peptide chain release factor 1 from Beijerinckia indica subsp. indica (strain ATCC 9039 / DSM 1715 / NCIMB 8712).